The chain runs to 345 residues: Cuticle collagen 14 (345 aa).

Triple-helical region regions lie at residues 156-185, 207-263, and 268-333; these read GPPG…PGPP, GDGG…PGTY, and GPAG…PGSC. The segment at 161–345 is disordered; the sequence is AGDGGRDGAD…CPPARLAPGY (185 aa). 3 stretches are compositionally biased toward pro residues: residues 179–191, 198–223, and 278–290; these read IGPP…PGPD, PQCP…PPGA, and RPGP…PAGP. Residues 292–304 show a composition bias toward gly residues; that stretch reads GENGKGGGQGPSG.

Belongs to the cuticular collagen family. Collagen polypeptide chains are complexed within the cuticle by disulfide bonds and other types of covalent cross-links.

In terms of biological role, nematode cuticles are composed largely of collagen-like proteins. The cuticle functions both as an exoskeleton and as a barrier to protect the worm from its environment. The chain is Cuticle collagen 14 (col-14) from Caenorhabditis elegans.